Here is a 286-residue protein sequence, read N- to C-terminus: Diaminopimelate epimerase (286 aa).

2 residues coordinate substrate: asparagine 12 and asparagine 67. Cysteine 76 (proton donor) is an active-site residue. Substrate is bound by residues 77–78 (GN), asparagine 165, asparagine 198, and 216–217 (ER). The active-site Proton acceptor is cysteine 225. 226–227 (GT) is a substrate binding site.

This sequence belongs to the diaminopimelate epimerase family. Homodimer.

The protein localises to the cytoplasm. The enzyme catalyses (2S,6S)-2,6-diaminopimelate = meso-2,6-diaminopimelate. Its pathway is amino-acid biosynthesis; L-lysine biosynthesis via DAP pathway; DL-2,6-diaminopimelate from LL-2,6-diaminopimelate: step 1/1. Functionally, catalyzes the stereoinversion of LL-2,6-diaminopimelate (L,L-DAP) to meso-diaminopimelate (meso-DAP), a precursor of L-lysine. This Methanothermobacter thermautotrophicus (strain ATCC 29096 / DSM 1053 / JCM 10044 / NBRC 100330 / Delta H) (Methanobacterium thermoautotrophicum) protein is Diaminopimelate epimerase.